The following is a 171-amino-acid chain: NADH-quinone oxidoreductase subunit I (171 aa).

2 consecutive 4Fe-4S ferredoxin-type domains span residues 41–71 (LTRD…LQKT) and 81–110 (EFFR…LTPD). Positions 51, 54, 57, 61, 90, 93, 96, and 100 each coordinate [4Fe-4S] cluster.

It belongs to the complex I 23 kDa subunit family. As to quaternary structure, NDH-1 is composed of 14 different subunits. Subunits NuoA, H, J, K, L, M, N constitute the membrane sector of the complex. Requires [4Fe-4S] cluster as cofactor.

The protein resides in the cell inner membrane. The catalysed reaction is a quinone + NADH + 5 H(+)(in) = a quinol + NAD(+) + 4 H(+)(out). NDH-1 shuttles electrons from NADH, via FMN and iron-sulfur (Fe-S) centers, to quinones in the respiratory chain. The immediate electron acceptor for the enzyme in this species is believed to be ubiquinone. Couples the redox reaction to proton translocation (for every two electrons transferred, four hydrogen ions are translocated across the cytoplasmic membrane), and thus conserves the redox energy in a proton gradient. This Methylococcus capsulatus (strain ATCC 33009 / NCIMB 11132 / Bath) protein is NADH-quinone oxidoreductase subunit I.